A 95-amino-acid chain; its full sequence is Lipolysis-activating peptide 1-beta chain (95 aa).

An N-terminal signal peptide occupies residues 1–22; sequence MISVQVIFIAFISIIAFSMVCG. Residues 23 to 91 form the LCN-type CS-alpha/beta domain; it reads GNVFPNRELG…FLNALEKQCP (69 aa). Cystine bridges form between cysteine 37-cysteine 60, cysteine 45-cysteine 70, and cysteine 49-cysteine 72.

As to quaternary structure, homodimer; disulfide-linked or monomer (edited version) or heterodimer of an alpha chain (AC P84810) and this beta chain (non-edited version). Expressed by the venom gland.

The protein resides in the secreted. Functionally, the homodimer inhibits HMG-CoA reductase (HMGCR) (32% of inhibition produced by 0.6 uM), a glycoprotein involved in the control of cholesterol biosynthesis. The inhibitory effects of bumarsin are seen at much lower concentrations (0.6 uM) than that for statins such as atorvastatin (5 mM) and simvastatin (10 uM). In addition to inhibition of HMG-CoA reductase, this protein lowers cholesterol levels by inducing steroid hormone synthesis via StAR, and by increasing reverse cholesterol transport mediated by the induction of ABCA1 and APOA1. The heterodimer non-edited LVP1 induces lipolysis in rat adipocytes. Induction of lipolysis by LVP1 appears to be mediated through the beta-2 adrenergic receptor pathway (ADRB2). Intracerebroventricular injection is not toxic to mice. Its function is as follows. The monomer edited version, similar to alpha-toxins, may modulate voltage-gated sodium channels (Nav) and may block voltage-gated potassium channels (Kv). In Buthus occitanus tunetanus (Common European scorpion), this protein is Lipolysis-activating peptide 1-beta chain.